Consider the following 68-residue polypeptide: Large ribosomal subunit protein bL32 (68 aa).

The tract at residues 1–24 (MAVPQNRVTRSRRNMRRSHDALVA) is disordered.

This sequence belongs to the bacterial ribosomal protein bL32 family.

This Paracoccus denitrificans (strain Pd 1222) protein is Large ribosomal subunit protein bL32.